Reading from the N-terminus, the 289-residue chain is MYB transcription factor 69 (289 aa).

HTH myb-type domains are found at residues 9 to 61 (KAGV…TNYL) and 62 to 116 (RPGI…KKKL). 2 consecutive DNA-binding regions (H-T-H motif) follow at residues 37–61 (WRAV…TNYL) and 89–112 (WAAI…NTHL). Disordered regions lie at residues 127–162 (APPR…ADST) and 225–252 (SSAI…QQQQ). Residues 139–154 (ADCRRHDMTRSSKDSH) show a composition bias toward basic and acidic residues.

Mainly expressed in highly lignified tissues such as vascular tissues.

The protein localises to the nucleus. Functionally, transcription factor that binds to the promoter of MYB31 and MYB42 and activates directly their expression, thus repressing lignin biosynthesis. This is MYB transcription factor 69 from Zea mays (Maize).